Consider the following 300-residue polypeptide: Protoheme IX farnesyltransferase (300 aa).

9 helical membrane-spanning segments follow: residues 24–44 (VTQL…PGMV), 48–68 (VLLG…AINC), 94–114 (LQIL…LYTF), 118–138 (LTMW…TLLL), 146–166 (IVIG…AVTG), 172–192 (AWIL…VLAL), 217–237 (LHIL…FISG), 239–259 (SGAV…AYAW), and 278–298 (IVYL…RPVI).

This sequence belongs to the UbiA prenyltransferase family. Protoheme IX farnesyltransferase subfamily.

Its subcellular location is the cell inner membrane. The enzyme catalyses heme b + (2E,6E)-farnesyl diphosphate + H2O = Fe(II)-heme o + diphosphate. It participates in porphyrin-containing compound metabolism; heme O biosynthesis; heme O from protoheme: step 1/1. In terms of biological role, converts heme B (protoheme IX) to heme O by substitution of the vinyl group on carbon 2 of heme B porphyrin ring with a hydroxyethyl farnesyl side group. This is Protoheme IX farnesyltransferase from Burkholderia thailandensis (strain ATCC 700388 / DSM 13276 / CCUG 48851 / CIP 106301 / E264).